Consider the following 395-residue polypeptide: MRFTLRAHVSTVTDLKPVSHRQTPHLLSADSKGCLYLWNLISRRPIASIDLKTHIIAIEVVGQGLYAALARDNKLRFISLQEESRLTRINDKVSRELQSLEIVYEIPVNCLNFANFALQDLGLRNYRLWCCNTMDAESIDVYEFQLGDRQSFKRTFNAINLFDSVAGLAEAKQKFRFDKMGIVMRFIVAGDTVFCGYESGVVVGLRIRDKSLQICYASFAHYPEPVLSLAHDRTERRVFSSSTTDQVCVHNIPTPDLPVVTSVSGIQVVANAGTREEVINAPLKKIGHLAVLNDILLLTSWHGYVLGLQDQKELFRYRKERNLLCVDDSTDGQAETKKEKPWINPGPIAGIAHSTDSQLVLEKLPIGGHRRLKNFLEHKWYITGYNDGTITVSQI.

WD repeat units follow at residues 7 to 48, 221 to 260, and 343 to 386; these read AHVS…PIAS, HYPE…LPVV, and INPG…TGYN.

It belongs to the WD repeat ASA1 family. As to quaternary structure, component of the ASTRA chromatin remodeling machinery complex.

It localises to the nucleus. Its function is as follows. Component of the ASTRA complex involved in chromatin remodeling. The sequence is that of ASTRA-associated protein 1 (ASA1) from Eremothecium gossypii (strain ATCC 10895 / CBS 109.51 / FGSC 9923 / NRRL Y-1056) (Yeast).